The sequence spans 520 residues: EGF domain-specific O-linked N-acetylglucosamine transferase (520 aa).

Residues 1–16 (MPILPILIGILHLSLA) form the signal peptide. N-linked (GlcNAc...) asparagine glycans are attached at residues Asn-52, Asn-176, and Asn-250. The Required for optimal activity signature appears at 292–294 (DVE). Residue Asn-479 is glycosylated (N-linked (GlcNAc...) asparagine). Positions 517-520 (RNEL) match the Prevents secretion from ER motif.

The cofactor is a divalent metal cation.

Its subcellular location is the endoplasmic reticulum lumen. The catalysed reaction is L-seryl-[protein] + UDP-N-acetyl-alpha-D-glucosamine = 3-O-(N-acetyl-beta-D-glucosaminyl)-L-seryl-[protein] + UDP + H(+). It catalyses the reaction L-threonyl-[protein] + UDP-N-acetyl-alpha-D-glucosamine = 3-O-(N-acetyl-beta-D-glucosaminyl)-L-threonyl-[protein] + UDP + H(+). Its function is as follows. Catalyzes the transfer of a single N-acetylglucosamine from UDP-GlcNAc to a serine or threonine residue in extracellular proteins resulting in their modification with a beta-linked N-acetylglucosamine (O-GlcNAc). Specifically glycosylates the Thr residue located between the fifth and sixth conserved cysteines of folded EGF-like domains. Involved in epithelial cell adhesion/interaction with the extracellular matrix by mediating glycosylation of proteins in the secretory pathway, such as Dumpy (Dp). In Drosophila melanogaster (Fruit fly), this protein is EGF domain-specific O-linked N-acetylglucosamine transferase (Eogt).